A 937-amino-acid polypeptide reads, in one-letter code: Isoleucine--tRNA ligase (937 aa).

The short motif at 58-68 (PYANGSIHIGH) is the 'HIGH' region element. E561 serves as a coordination point for L-isoleucyl-5'-AMP. The 'KMSKS' region signature appears at 602–606 (KMSKS). An ATP-binding site is contributed by K605. Residues C900, C903, C920, and C923 each contribute to the Zn(2+) site.

This sequence belongs to the class-I aminoacyl-tRNA synthetase family. IleS type 1 subfamily. In terms of assembly, monomer. The cofactor is Zn(2+).

It is found in the cytoplasm. The enzyme catalyses tRNA(Ile) + L-isoleucine + ATP = L-isoleucyl-tRNA(Ile) + AMP + diphosphate. Its function is as follows. Catalyzes the attachment of isoleucine to tRNA(Ile). As IleRS can inadvertently accommodate and process structurally similar amino acids such as valine, to avoid such errors it has two additional distinct tRNA(Ile)-dependent editing activities. One activity is designated as 'pretransfer' editing and involves the hydrolysis of activated Val-AMP. The other activity is designated 'posttransfer' editing and involves deacylation of mischarged Val-tRNA(Ile). This Photorhabdus laumondii subsp. laumondii (strain DSM 15139 / CIP 105565 / TT01) (Photorhabdus luminescens subsp. laumondii) protein is Isoleucine--tRNA ligase.